Consider the following 329-residue polypeptide: DNA-directed RNA polymerase subunit alpha (329 aa).

An alpha N-terminal domain (alpha-NTD) region spans residues 1 to 235 (MQNSIMDFLR…EQLEAFVDLR (235 aa)). The segment at 249–329 (FEPILLRPVD…NWPPSSILDE (81 aa)) is alpha C-terminal domain (alpha-CTD).

Belongs to the RNA polymerase alpha chain family. As to quaternary structure, homodimer. The RNAP catalytic core consists of 2 alpha, 1 beta, 1 beta' and 1 omega subunit. When a sigma factor is associated with the core the holoenzyme is formed, which can initiate transcription.

The catalysed reaction is RNA(n) + a ribonucleoside 5'-triphosphate = RNA(n+1) + diphosphate. In terms of biological role, DNA-dependent RNA polymerase catalyzes the transcription of DNA into RNA using the four ribonucleoside triphosphates as substrates. The protein is DNA-directed RNA polymerase subunit alpha of Buchnera aphidicola subsp. Acyrthosiphon pisum (strain APS) (Acyrthosiphon pisum symbiotic bacterium).